The following is a 306-amino-acid chain: Aspartate carbamoyltransferase catalytic subunit (306 aa).

Residues R55 and T56 each coordinate carbamoyl phosphate. Position 84 (K84) interacts with L-aspartate. The carbamoyl phosphate site is built by R105, H133, and Q136. 2 residues coordinate L-aspartate: R166 and R227. 2 residues coordinate carbamoyl phosphate: L265 and P266.

It belongs to the aspartate/ornithine carbamoyltransferase superfamily. ATCase family. Heterododecamer (2C3:3R2) of six catalytic PyrB chains organized as two trimers (C3), and six regulatory PyrI chains organized as three dimers (R2).

The enzyme catalyses carbamoyl phosphate + L-aspartate = N-carbamoyl-L-aspartate + phosphate + H(+). The protein operates within pyrimidine metabolism; UMP biosynthesis via de novo pathway; (S)-dihydroorotate from bicarbonate: step 2/3. Its function is as follows. Catalyzes the condensation of carbamoyl phosphate and aspartate to form carbamoyl aspartate and inorganic phosphate, the committed step in the de novo pyrimidine nucleotide biosynthesis pathway. This chain is Aspartate carbamoyltransferase catalytic subunit, found in Neisseria meningitidis serogroup A / serotype 4A (strain DSM 15465 / Z2491).